The sequence spans 553 residues: Ubiquitin carboxyl-terminal hydrolase 17-like protein 15 (553 aa).

One can recognise a USP domain in the interval 80–375; the sequence is AGLQNMGNTC…QAYVLFYIQK (296 aa). Cysteine 89 (nucleophile) is an active-site residue. Histidine 334 (proton acceptor) is an active-site residue. 2 stretches are compositionally biased toward basic and acidic residues: residues 382-392 and 398-413; these read SESVSRGREPR and DTDR…RDHP. Disordered regions lie at residues 382-413 and 491-524; these read SESV…RDHP and STTP…HSKR. The span at 496 to 505 shows a compositional bias: polar residues; it reads HQESMNTGTL. Residues 510–524 show a composition bias toward basic residues; it reads GRARRSKGKNKHSKR.

The protein belongs to the peptidase C19 family. USP17 subfamily.

The protein resides in the nucleus. It localises to the endoplasmic reticulum. It catalyses the reaction Thiol-dependent hydrolysis of ester, thioester, amide, peptide and isopeptide bonds formed by the C-terminal Gly of ubiquitin (a 76-residue protein attached to proteins as an intracellular targeting signal).. Functionally, deubiquitinating enzyme that removes conjugated ubiquitin from specific proteins to regulate different cellular processes that may include cell proliferation, progression through the cell cycle, apoptosis, cell migration, and the cellular response to viral infection. The protein is Ubiquitin carboxyl-terminal hydrolase 17-like protein 15 (USP17L15) of Homo sapiens (Human).